We begin with the raw amino-acid sequence, 175 residues long: Keratin-associated protein 13-2 (175 aa).

5 tandem repeats follow at residues Cys-46–Gly-55, Cys-56–Ser-65, Cys-66–Pro-75, Cys-76–Thr-85, and Cys-92–Gly-101. Residues Cys-46–Gly-101 are 5 X 10 AA approximate repeats.

This sequence belongs to the PMG family. Interacts with hair keratins.

In the hair cortex, hair keratin intermediate filaments are embedded in an interfilamentous matrix, consisting of hair keratin-associated proteins (KRTAP), which are essential for the formation of a rigid and resistant hair shaft through their extensive disulfide bond cross-linking with abundant cysteine residues of hair keratins. The matrix proteins include the high-sulfur and high-glycine-tyrosine keratins. In Homo sapiens (Human), this protein is Keratin-associated protein 13-2 (KRTAP13-2).